Reading from the N-terminus, the 121-residue chain is Cysteine-rich neurotrophic factor (121 aa).

The first 18 residues, 1-18 (MLLKLIVALSLTLTLASA), serve as a signal peptide directing secretion. Asparagine 57 is a glycosylation site (N-linked (GlcNAc...) asparagine).

Its subcellular location is the secreted. Interacts with the p75 low-affinity neurotrophin receptor. Evokes neurite outgrowth and modulated calcium currents in pedal motor neurons. May be involved in target-derived trophic support for motor neurons. In Lymnaea stagnalis (Great pond snail), this protein is Cysteine-rich neurotrophic factor.